Reading from the N-terminus, the 128-residue chain is NHP2-like protein 1 (128 aa).

The tract at residues 36-48 is interaction with U4 snRNA and U4atac snRNA; it reads RKGANEATKTLNR. The tract at residues 96 to 128 is important for U4 snRNA-binding; sequence SRPVIACSVTIKEGSQLKPQIQSVQQAIERLLV.

This sequence belongs to the eukaryotic ribosomal protein eL8 family. Identified in the spliceosome B complex. Component of the U4/U6-U5 tri-snRNP complex. Part of the small subunit (SSU) processome, composed of more than 70 proteins and the RNA chaperone small nucleolar RNA (snoRNA) U3.

Its subcellular location is the nucleus. It is found in the nucleolus. In terms of biological role, part of the small subunit (SSU) processome, first precursor of the small eukaryotic ribosomal subunit. During the assembly of the SSU processome in the nucleolus, many ribosome biogenesis factors, an RNA chaperone and ribosomal proteins associate with the nascent pre-rRNA and work in concert to generate RNA folding, modifications, rearrangements and cleavage as well as targeted degradation of pre-ribosomal RNA by the RNA exosome. Involved in pre-mRNA splicing as component of the spliceosome. Binds to the 5'-stem-loop of U4 snRNA and thereby contributes to spliceosome assembly. The protein undergoes a conformational change upon RNA-binding. Core component of box C/D small nucleolar ribonucleoprotein (snoRNP) complexes that function in methylation of multiple sites on ribosomal RNAs (rRNAs) and messenger RNAs (mRNAs). The chain is NHP2-like protein 1 from Xenopus laevis (African clawed frog).